Reading from the N-terminus, the 267-residue chain is 4-hydroxy-tetrahydrodipicolinate reductase (267 aa).

Residues 8-13 (GAAGRM) and Glu34 each bind NAD(+). Residue Arg35 participates in NADP(+) binding. NAD(+)-binding positions include 98-100 (GST) and 122-125 (APNM). His155 functions as the Proton donor/acceptor in the catalytic mechanism. A (S)-2,3,4,5-tetrahydrodipicolinate-binding site is contributed by His156. Lys159 (proton donor) is an active-site residue. 165–166 (GT) provides a ligand contact to (S)-2,3,4,5-tetrahydrodipicolinate.

Belongs to the DapB family.

Its subcellular location is the cytoplasm. It carries out the reaction (S)-2,3,4,5-tetrahydrodipicolinate + NAD(+) + H2O = (2S,4S)-4-hydroxy-2,3,4,5-tetrahydrodipicolinate + NADH + H(+). The enzyme catalyses (S)-2,3,4,5-tetrahydrodipicolinate + NADP(+) + H2O = (2S,4S)-4-hydroxy-2,3,4,5-tetrahydrodipicolinate + NADPH + H(+). It participates in amino-acid biosynthesis; L-lysine biosynthesis via DAP pathway; (S)-tetrahydrodipicolinate from L-aspartate: step 4/4. Catalyzes the conversion of 4-hydroxy-tetrahydrodipicolinate (HTPA) to tetrahydrodipicolinate. The chain is 4-hydroxy-tetrahydrodipicolinate reductase from Pelobacter propionicus (strain DSM 2379 / NBRC 103807 / OttBd1).